A 222-amino-acid chain; its full sequence is Matrix protein (222 aa).

The PTAP/PSAP motif motif lies at 46–49; sequence PTAP.

Homomultimer. Interacts with viral nucleocapsid. Interacts with host TSG101.

It localises to the virion membrane. It is found in the host endomembrane system. Its subcellular location is the host nucleus membrane. In terms of biological role, plays a major role in assembly and budding of virion, by recruiting cellular partners of the ESCRT complexes that play a key role in releasing the budding particle from the host membrane. Condensates the ribonucleocapsid core during virus assembly. The protein is Matrix protein (M) of Drosophila melanogaster (Fruit fly).